The following is an 809-amino-acid chain: H(+)/Cl(-) exchange transporter 7 (809 aa).

Over 1–130 the chain is Cytoplasmic; sequence MANVSKKVSW…TAFRTVEIKR (130 aa). Residues Ser-9 and Ser-64 each carry the phosphoserine modification. The next 2 membrane-spanning stretches (helical) occupy residues 131–163 and 178–201; these read WVIC…YRLV and FSLL…VAFI. Residues 207 to 211 carry the Selectivity filter part_1 motif; sequence GSGIP. Ser-208 contributes to the chloride binding site. The segment at residues 210–217 is an intramembrane region (helical); the sequence is IPQIKCFL. A run of 2 helical transmembrane segments spans residues 227 to 245 and 251 to 268; these read RLKT…VVGG and EGPM…ISQG. The short motif at 249–253 is the Selectivity filter part_2 element; it reads GKEGP. 2 intramembrane regions (helical) span residues 292-304 and 308-316; these read FVSA…VSAA and PVGGVLFSL. Helical transmembrane passes span 326–345, 379–409, 414–436, 491–511, and 516–539; these read FLTW…LNFV, IPIF…FRIR, PCLQ…FVLI, PMTL…TYGL, and GVFI…LSYI. The short motif at 516 to 520 is the Selectivity filter part_3 element; it reads GVFIP. Residue Phe-518 participates in chloride binding. Positions 549–563 form an intramembrane region, helical; it reads GKYALMGAAAQLGGI. An intramembrane region (note=Loop between two helices) is located at residues 564 to 566; that stretch reads VRM. Residues 567 to 578 constitute an intramembrane region (helical); sequence TLSLTVIMMEAT. An intramembrane region (note=Loop between two helices) is located at residues 579 to 582; it reads SSVT. The helical transmembrane segment at 583 to 601 threads the bilayer; sequence YGFPIMLVLMTAKIVGDVF. Over 602-809 the chain is Cytoplasmic; it reads IEGLYDMHIQ…GLEELSLAQT (208 aa). A chloride-binding site is contributed by Tyr-606. CBS domains are found at residues 635–699 and 745–803; these read MSTP…VFVE and MNPS…GLEE. ATP is bound by residues 662-664 and 787-790; these read HNG and TRKD. Ser-805 is subject to Phosphoserine.

Belongs to the chloride channel (TC 2.A.49) family. ClC-7/CLCN7 subfamily. In terms of assembly, chloride channel 7 are heteromers of alpha (CLCN7) and beta (OSTM1) subunits.

Its subcellular location is the lysosome membrane. The enzyme catalyses 2 chloride(in) + H(+)(out) = 2 chloride(out) + H(+)(in). In terms of biological role, slowly voltage-gated channel mediating the exchange of chloride ions against protons. Functions as antiporter and contributes to the acidification of the lysosome lumen and may be involved in maintaining lysosomal pH. The CLC channel family contains both chloride channels and proton-coupled anion transporters that exchange chloride or another anion for protons. The presence of conserved gating glutamate residues is typical for family members that function as antiporters. The chain is H(+)/Cl(-) exchange transporter 7 (CLCN7) from Bos taurus (Bovine).